The following is a 921-amino-acid chain: Isoleucine--tRNA ligase (921 aa).

Positions 57–67 (PYANGDIHMGH) match the 'HIGH' region motif. Glu553 provides a ligand contact to L-isoleucyl-5'-AMP. The 'KMSKS' region motif lies at 594–598 (KMSKS). Residue Lys597 participates in ATP binding.

Belongs to the class-I aminoacyl-tRNA synthetase family. IleS type 1 subfamily. Monomer.

Its subcellular location is the cytoplasm. It catalyses the reaction tRNA(Ile) + L-isoleucine + ATP = L-isoleucyl-tRNA(Ile) + AMP + diphosphate. Its function is as follows. Catalyzes the attachment of isoleucine to tRNA(Ile). As IleRS can inadvertently accommodate and process structurally similar amino acids such as valine, to avoid such errors it has two additional distinct tRNA(Ile)-dependent editing activities. One activity is designated as 'pretransfer' editing and involves the hydrolysis of activated Val-AMP. The other activity is designated 'posttransfer' editing and involves deacylation of mischarged Val-tRNA(Ile). In Bacillus subtilis (strain 168), this protein is Isoleucine--tRNA ligase.